Consider the following 436-residue polypeptide: MRQALPLVTRQGDRIAIVSGLRTPFARQATAFHGIPAVDLGKMVVGELLARSEIPADAIEQLVFGQVVQMPEAPNIAREIVLGTGMNVHTDAYSVSRACATSFQAVANVAESLMAGTIRAGIAGGADSSSVLPIGVSKALARVLVDVNKARTTRQRLTLFSRLRLRDLLPVPPAVAEYSTGLRMGDTAEQMAKTYGITREQQDALAHRSHQRAAQAWAEGKLAEEVMTTYVPPYKNPFAEDNNIRGTSTLADYAKLRPAFDRKHGSVTAANSTPLTDGAAAVILMTESRAKELGLHPLGYLRSYAFTAIDVWQDMLLGPAWSTPLALERAGLTMADLTLFDMHEAFAAQTLANLQLLGSERFAREVLGRAQATGEVDDAKFNVLGGSIAYGHPFAATGARMITQTLHELRRRGGGFGLVTACAAGGLGAAMVLEAK.

Cys99 (acyl-thioester intermediate) is an active-site residue. Catalysis depends on proton acceptor residues His392 and Cys422.

The protein belongs to the thiolase-like superfamily. Thiolase family. In terms of assembly, heterotetramer of two alpha chains (FadJ) and two beta chains (FadI).

The protein resides in the cytoplasm. It catalyses the reaction an acyl-CoA + acetyl-CoA = a 3-oxoacyl-CoA + CoA. Its pathway is lipid metabolism; fatty acid beta-oxidation. In terms of biological role, catalyzes the final step of fatty acid oxidation in which acetyl-CoA is released and the CoA ester of a fatty acid two carbons shorter is formed. The chain is 3-ketoacyl-CoA thiolase from Salmonella newport (strain SL254).